Here is a 375-residue protein sequence, read N- to C-terminus: Probable pectin lyase B (375 aa).

An N-terminal signal peptide occupies residues 1-19 (MKYAAFLPTIGALVSQAIA). 2 disulfide bridges follow: cysteine 82–cysteine 101 and cysteine 91–cysteine 225. N-linked (GlcNAc...) asparagine glycosylation occurs at asparagine 128. The active site involves arginine 255. An intrachain disulfide couples cysteine 321 to cysteine 329.

Belongs to the polysaccharide lyase 1 family.

Its subcellular location is the secreted. The catalysed reaction is Eliminative cleavage of (1-&gt;4)-alpha-D-galacturonan methyl ester to give oligosaccharides with 4-deoxy-6-O-methyl-alpha-D-galact-4-enuronosyl groups at their non-reducing ends.. Pectinolytic enzymes consist of four classes of enzymes: pectin lyase, polygalacturonase, pectin methylesterase and rhamnogalacturonase. Among pectinolytic enzymes, pectin lyase is the most important in depolymerization of pectin, since it cleaves internal glycosidic bonds of highly methylated pectins. The polypeptide is Probable pectin lyase B (pelB) (Aspergillus fumigatus (strain CBS 144.89 / FGSC A1163 / CEA10) (Neosartorya fumigata)).